A 140-amino-acid chain; its full sequence is Flagellar assembly factor FliW (140 aa).

It belongs to the FliW family. Interacts with translational regulator CsrA and flagellin(s).

It is found in the cytoplasm. Its function is as follows. Acts as an anti-CsrA protein, binds CsrA and prevents it from repressing translation of its target genes, one of which is flagellin. Binds to flagellin and participates in the assembly of the flagellum. This is Flagellar assembly factor FliW from Syntrophotalea carbinolica (strain DSM 2380 / NBRC 103641 / GraBd1) (Pelobacter carbinolicus).